The chain runs to 525 residues: Peptide chain release factor 3 (525 aa).

In terms of domain architecture, tr-type G spans E11–E279. Residues S20 to T27, D88 to H92, and N142 to D145 contribute to the GTP site.

Belongs to the TRAFAC class translation factor GTPase superfamily. Classic translation factor GTPase family. PrfC subfamily.

Its subcellular location is the cytoplasm. Its function is as follows. Increases the formation of ribosomal termination complexes and stimulates activities of RF-1 and RF-2. It binds guanine nucleotides and has strong preference for UGA stop codons. It may interact directly with the ribosome. The stimulation of RF-1 and RF-2 is significantly reduced by GTP and GDP, but not by GMP. In Latilactobacillus sakei subsp. sakei (strain 23K) (Lactobacillus sakei subsp. sakei), this protein is Peptide chain release factor 3.